Reading from the N-terminus, the 218-residue chain is Holliday junction branch migration complex subunit RuvA (218 aa).

Residues 1–64 (MIGKITGRLE…EDVMQLFGFT (64 aa)) are domain I. Positions 65-143 (TLTEKEWHRL…SVMGMSDTQA (79 aa)) are domain II. Positions 144–164 (TVAAQSSDAVIETRAAPSPVV) are flexible linker. The tract at residues 165–218 (QNPSAQAEALSALSNLGYAPGDAAAAVAQAAGELPDAETPDLIRAALKRLAPKG) is domain III.

This sequence belongs to the RuvA family. In terms of assembly, homotetramer. Forms an RuvA(8)-RuvB(12)-Holliday junction (HJ) complex. HJ DNA is sandwiched between 2 RuvA tetramers; dsDNA enters through RuvA and exits via RuvB. An RuvB hexamer assembles on each DNA strand where it exits the tetramer. Each RuvB hexamer is contacted by two RuvA subunits (via domain III) on 2 adjacent RuvB subunits; this complex drives branch migration. In the full resolvosome a probable DNA-RuvA(4)-RuvB(12)-RuvC(2) complex forms which resolves the HJ.

The protein resides in the cytoplasm. Functionally, the RuvA-RuvB-RuvC complex processes Holliday junction (HJ) DNA during genetic recombination and DNA repair, while the RuvA-RuvB complex plays an important role in the rescue of blocked DNA replication forks via replication fork reversal (RFR). RuvA specifically binds to HJ cruciform DNA, conferring on it an open structure. The RuvB hexamer acts as an ATP-dependent pump, pulling dsDNA into and through the RuvAB complex. HJ branch migration allows RuvC to scan DNA until it finds its consensus sequence, where it cleaves and resolves the cruciform DNA. The polypeptide is Holliday junction branch migration complex subunit RuvA (Roseobacter denitrificans (strain ATCC 33942 / OCh 114) (Erythrobacter sp. (strain OCh 114))).